A 279-amino-acid polypeptide reads, in one-letter code: DegV domain-containing protein M6_Spy1246 (279 aa).

The region spanning 4 to 278 (IKIVTDSSIT…EGAFAVMVRY (275 aa)) is the DegV domain. Positions 62 and 95 each coordinate hexadecanoate.

Functionally, may bind long-chain fatty acids, such as palmitate, and may play a role in lipid transport or fatty acid metabolism. The protein is DegV domain-containing protein M6_Spy1246 of Streptococcus pyogenes serotype M6 (strain ATCC BAA-946 / MGAS10394).